Here is a 117-residue protein sequence, read N- to C-terminus: Large ribosomal subunit protein bL20c (117 aa).

The protein belongs to the bacterial ribosomal protein bL20 family.

It is found in the plastid. It localises to the chloroplast. Its function is as follows. Binds directly to 23S ribosomal RNA and is necessary for the in vitro assembly process of the 50S ribosomal subunit. It is not involved in the protein synthesizing functions of that subunit. The sequence is that of Large ribosomal subunit protein bL20c from Populus alba (White poplar).